Consider the following 311-residue polypeptide: Methionyl-tRNA formyltransferase (311 aa).

A (6S)-5,6,7,8-tetrahydrofolate-binding site is contributed by 110-113 (SLLP).

This sequence belongs to the Fmt family.

It catalyses the reaction L-methionyl-tRNA(fMet) + (6R)-10-formyltetrahydrofolate = N-formyl-L-methionyl-tRNA(fMet) + (6S)-5,6,7,8-tetrahydrofolate + H(+). Functionally, attaches a formyl group to the free amino group of methionyl-tRNA(fMet). The formyl group appears to play a dual role in the initiator identity of N-formylmethionyl-tRNA by promoting its recognition by IF2 and preventing the misappropriation of this tRNA by the elongation apparatus. This Streptococcus uberis (strain ATCC BAA-854 / 0140J) protein is Methionyl-tRNA formyltransferase.